The sequence spans 203 residues: Outer-membrane lipoprotein LolB (203 aa).

A signal peptide spans 1 to 17 (MNRLFRLLPLASLVLTA). C18 is lipidated: N-palmitoyl cysteine. C18 is lipidated: S-diacylglycerol cysteine.

It belongs to the LolB family. In terms of assembly, monomer.

It is found in the cell outer membrane. Functionally, plays a critical role in the incorporation of lipoproteins in the outer membrane after they are released by the LolA protein. In Klebsiella pneumoniae (strain 342), this protein is Outer-membrane lipoprotein LolB.